Consider the following 548-residue polypeptide: 5-aminolevulinate synthase, mitochondrial (548 aa).

The N-terminal 22 residues, 1–22 (MQRSIFARFGNSSAAVSTLNRL), are a transit peptide targeting the mitochondrion. The substrate site is built by Arg-91, Ser-204, and Lys-223. Pyridoxal 5'-phosphate-binding residues include Ser-256, His-284, and Thr-334. Lys-337 is a catalytic residue. Lys-337 bears the N6-(pyridoxal phosphate)lysine mark. Thr-366 and Thr-367 together coordinate pyridoxal 5'-phosphate. Residue Thr-452 participates in substrate binding.

It belongs to the class-II pyridoxal-phosphate-dependent aminotransferase family. In terms of assembly, homodimer. Interacts with MCX1. Pyridoxal 5'-phosphate is required as a cofactor.

The protein localises to the mitochondrion matrix. The catalysed reaction is succinyl-CoA + glycine + H(+) = 5-aminolevulinate + CO2 + CoA. It participates in porphyrin-containing compound metabolism; protoporphyrin-IX biosynthesis; 5-aminolevulinate from glycine: step 1/1. Ihnhibited by hemin. Its function is as follows. Catalyzes the synthesis of 5-aminolevulinate (ALA) from succinyl-CoA and glycine, the first and rate-limiting step in heme biosynthesis. In Saccharomyces cerevisiae (strain ATCC 204508 / S288c) (Baker's yeast), this protein is 5-aminolevulinate synthase, mitochondrial.